Here is a 345-residue protein sequence, read N- to C-terminus: MSNQRSSLKHLNTFALPAYASNVISAGSVETLIAAWHESKAKRQPVLLLGEGSNVLFIKNFSGTVLLNRIMGITSTEDSAAWYLHVGAGENWHQLVCHSLQNNMPGLENLALIPGCVGSAPIQNIGAYGVELKQVCEYVDLLDMDKGTIQRISAEECQFGYRDSIFKHRYGNGFAIVSVGIKLMKSWTPTLGYGDLIHMDPLTVTATDIFNSVCTMRRSKLPDPMVTGNAGSFFKNPVVSAAIAEEIVHCYPNAPHYLQPDGSVKLAAGWLIDQCSLKGYQIGGAAVHQQQALVLINQSEATGQDVIHLARYIRQQVAQRFSIWLEPEVRFIADNGEVNAVEHLS.

The FAD-binding PCMH-type domain occupies 16-186; the sequence is LPAYASNVIS…VSVGIKLMKS (171 aa). Arginine 162 is a catalytic residue. Serine 232 serves as the catalytic Proton donor. Glutamate 328 is a catalytic residue.

This sequence belongs to the MurB family. The cofactor is FAD.

The protein resides in the cytoplasm. It carries out the reaction UDP-N-acetyl-alpha-D-muramate + NADP(+) = UDP-N-acetyl-3-O-(1-carboxyvinyl)-alpha-D-glucosamine + NADPH + H(+). Its pathway is cell wall biogenesis; peptidoglycan biosynthesis. Cell wall formation. This Yersinia pestis protein is UDP-N-acetylenolpyruvoylglucosamine reductase.